The chain runs to 217 residues: Chorionic somatomammotropin hormone 1 (217 aa).

An N-terminal signal peptide occupies residues 1 to 26 (MAPGSRTSLLLAFALLCLPWLQEAGA). Histidine 44 serves as a coordination point for Zn(2+). Cysteines 79 and 191 form a disulfide. Position 200 (glutamate 200) interacts with Zn(2+). A disulfide bridge links cysteine 208 with cysteine 215.

Belongs to the somatotropin/prolactin family. In terms of assembly, can be found in a monomeric as well as dimeric form.

The protein resides in the secreted. Functionally, produced only during pregnancy and is involved in stimulating lactation, fetal growth and metabolism. Does not interact with GHR but only activates PRLR through zinc-induced dimerization. This is Chorionic somatomammotropin hormone 1 (CSH1) from Homo sapiens (Human).